The chain runs to 235 residues: Small ribosomal subunit protein uS2 (235 aa).

The protein belongs to the universal ribosomal protein uS2 family.

This chain is Small ribosomal subunit protein uS2, found in Anoxybacillus flavithermus (strain DSM 21510 / WK1).